The primary structure comprises 267 residues: CD82 antigen (267 aa).

Residues 1–11 (MGSACIKVTKY) are Cytoplasmic-facing. C5 carries S-palmitoyl cysteine lipidation. A helical membrane pass occupies residues 12-32 (FLFLFNLIFFILGAVILGFGV). Topologically, residues 33 to 53 (WILADKSSFISVLQTSSSSLR) are extracellular. Residues 54–72 (MGAYVFIGVGAVTMLMGFL) form a helical membrane-spanning segment. Topologically, residues 73 to 83 (GCIGAVNEVRC) are cytoplasmic. Residue C74 is the site of S-palmitoyl cysteine attachment. A helical membrane pass occupies residues 84 to 110 (LLGLYFAFLLLILIAQVTAGALFYFNM). Residues 111–228 (GKLKQEMGGI…KVQAWLQENL (118 aa)) lie on the Extracellular side of the membrane. N129, N157, and N198 each carry an N-linked (GlcNAc...) asparagine glycan. Residues 229-250 (GIILGVGVGVAIIELLGMVLSI) traverse the membrane as a helical segment. Topologically, residues 251–267 (CLCRHVHSEDYSKVPKY) are cytoplasmic.

This sequence belongs to the tetraspanin (TM4SF) family. As to quaternary structure, forms homooligomers. Interacts directly with IGSF8. Interacts with EGFR. Interacts with VEGFA and PDGFB. Interacts with ITGA4. Interacts with ITGA6; this interaction reduces ITGA6 cell surface expression. Interacts with ITGB1. Interacts with TLR4; this interaction inhibits TLR4-mediated signaling pathway. Interacts with TLR9. Interacts with PLAUR. Post-translationally, palmitoylated. Palmitoylation contributes to oligomerization and surface expression. As to expression, lymphoid specific.

It is found in the cell membrane. The protein resides in the cytoplasmic vesicle. Its subcellular location is the phagosome. Structural component of specialized membrane microdomains known as tetraspanin-enriched microdomains (TERMs), which act as platforms for receptor clustering and signaling. Participates thereby in diverse biological functions such as cell signal transduction, adhesion, migration and protein trafficking. Acts as a attenuator of EGF signaling, facilitating ligand-induced endocytosis of the receptor and its subsequent desensitization. Mechanistically, modulates ligand-induced ubiquitination and trafficking of EGFR via E3 ligase CBL phosphorylation by PKC. Increases cell-matrix adhesion by regulating the membrane organization of integrin alpha4/ITA4. Modulates adhesion and suppresses cell migration through other integrins such as the alpha6/ITGA6 and beta1/ITGB1. Decreases cell-associated plasminogen activation by interfering with the interaction between urokinase-type plasminogen activator/PLAU and its receptor PLAUR. Associates with CD4 or CD8 and delivers costimulatory signals for the TCR/CD3 pathway. Plays a role in TLR9 trafficking to acidified CpG-containing compartments by controlling interaction between TLR9 and VAMP3 and subsequent myddosome assembly. Inhibits LPS-induced inflammatory response by preventing binding of LPS to TLR4 on the cell surface. Plays a role in the activation of macrophages into anti-inflammatory phenotypes. Independently of Toll-like receptor (TLR) signaling, is recruited to pathogen-containing phagosomes prior to fusion with lysosomes and thereby participates in antigen presentation. Also acts to control angiogenesis and switch angiogenic milieu to quiescent state by binding and sequestering VEGFA and PDGFB to inhibit the signaling they trigger via their respective cell surface receptor. In Homo sapiens (Human), this protein is CD82 antigen (CD82).